The sequence spans 394 residues: Elongation factor Tu (394 aa).

The tr-type G domain maps to 10–204 (KPHVNVGTIG…AMDDYIPAPE (195 aa)). The interval 19–26 (GHVDHGKT) is G1. 19 to 26 (GHVDHGKT) contributes to the GTP binding site. Thr26 lines the Mg(2+) pocket. Positions 60-64 (GITIN) are G2. Residues 81–84 (DCPG) form a G3 region. Residues 81-85 (DCPGH) and 136-139 (NKCD) contribute to the GTP site. The G4 stretch occupies residues 136–139 (NKCD). Residues 174–176 (SAL) form a G5 region.

This sequence belongs to the TRAFAC class translation factor GTPase superfamily. Classic translation factor GTPase family. EF-Tu/EF-1A subfamily. Monomer.

The protein resides in the cytoplasm. The enzyme catalyses GTP + H2O = GDP + phosphate + H(+). Functionally, GTP hydrolase that promotes the GTP-dependent binding of aminoacyl-tRNA to the A-site of ribosomes during protein biosynthesis. This is Elongation factor Tu from Francisella tularensis subsp. holarctica (strain FTNF002-00 / FTA).